A 538-amino-acid polypeptide reads, in one-letter code: Bifunctional purine biosynthesis protein PurH (538 aa).

The MGS-like domain maps to 6 to 158 (KHIPAPDLHR…KNHAYVATVV (153 aa)).

It belongs to the PurH family.

It catalyses the reaction (6R)-10-formyltetrahydrofolate + 5-amino-1-(5-phospho-beta-D-ribosyl)imidazole-4-carboxamide = 5-formamido-1-(5-phospho-D-ribosyl)imidazole-4-carboxamide + (6S)-5,6,7,8-tetrahydrofolate. The enzyme catalyses IMP + H2O = 5-formamido-1-(5-phospho-D-ribosyl)imidazole-4-carboxamide. Its pathway is purine metabolism; IMP biosynthesis via de novo pathway; 5-formamido-1-(5-phospho-D-ribosyl)imidazole-4-carboxamide from 5-amino-1-(5-phospho-D-ribosyl)imidazole-4-carboxamide (10-formyl THF route): step 1/1. It functions in the pathway purine metabolism; IMP biosynthesis via de novo pathway; IMP from 5-formamido-1-(5-phospho-D-ribosyl)imidazole-4-carboxamide: step 1/1. The sequence is that of Bifunctional purine biosynthesis protein PurH from Brucella anthropi (strain ATCC 49188 / DSM 6882 / CCUG 24695 / JCM 21032 / LMG 3331 / NBRC 15819 / NCTC 12168 / Alc 37) (Ochrobactrum anthropi).